A 105-amino-acid chain; its full sequence is UPF0473 protein SAG2089 (105 aa).

It belongs to the UPF0473 family.

The sequence is that of UPF0473 protein SAG2089 from Streptococcus agalactiae serotype V (strain ATCC BAA-611 / 2603 V/R).